A 229-amino-acid chain; its full sequence is Heptaprenylglyceryl phosphate synthase (229 aa).

A sn-glycerol 1-phosphate-binding site is contributed by lysine 12. Mg(2+) contacts are provided by aspartate 14 and serine 40. Residues 159-164 (YLEYSG), glycine 189, and 209-210 (GN) contribute to the sn-glycerol 1-phosphate site.

It belongs to the GGGP/HepGP synthase family. Group I subfamily. In terms of assembly, homodimer. Mg(2+) is required as a cofactor.

It catalyses the reaction sn-glycerol 1-phosphate + all-trans-heptaprenyl diphosphate = 3-heptaprenyl-sn-glycero-1-phosphate + diphosphate. Its pathway is membrane lipid metabolism; glycerophospholipid metabolism. Its function is as follows. Prenyltransferase that catalyzes in vivo the transfer of the heptaprenyl moiety of heptaprenyl pyrophosphate (HepPP; 35 carbon atoms) to the C3 hydroxyl of sn-glycerol-1-phosphate (G1P), producing heptaprenylglyceryl phosphate (HepGP). This reaction is an ether-bond-formation step in the biosynthesis of archaea-type G1P-based membrane lipids found in Bacillales. The sequence is that of Heptaprenylglyceryl phosphate synthase from Bacillus cereus (strain ZK / E33L).